The sequence spans 451 residues: Phosphoglucosamine mutase (451 aa).

The active-site Phosphoserine intermediate is the Ser-101. Mg(2+) is bound by residues Ser-101, Asp-240, Asp-242, and Asp-244. Position 101 is a phosphoserine (Ser-101).

It belongs to the phosphohexose mutase family. Mg(2+) is required as a cofactor. In terms of processing, activated by phosphorylation.

The enzyme catalyses alpha-D-glucosamine 1-phosphate = D-glucosamine 6-phosphate. Its function is as follows. Catalyzes the conversion of glucosamine-6-phosphate to glucosamine-1-phosphate. The chain is Phosphoglucosamine mutase from Streptococcus pyogenes serotype M3 (strain SSI-1).